The sequence spans 496 residues: Glutamyl-tRNA(Gln) amidotransferase subunit A (496 aa).

Catalysis depends on charge relay system residues lysine 75 and serine 150. The active-site Acyl-ester intermediate is the serine 174.

It belongs to the amidase family. GatA subfamily. As to quaternary structure, heterotrimer of A, B and C subunits.

It carries out the reaction L-glutamyl-tRNA(Gln) + L-glutamine + ATP + H2O = L-glutaminyl-tRNA(Gln) + L-glutamate + ADP + phosphate + H(+). Functionally, allows the formation of correctly charged Gln-tRNA(Gln) through the transamidation of misacylated Glu-tRNA(Gln) in organisms which lack glutaminyl-tRNA synthetase. The reaction takes place in the presence of glutamine and ATP through an activated gamma-phospho-Glu-tRNA(Gln). The sequence is that of Glutamyl-tRNA(Gln) amidotransferase subunit A from Burkholderia vietnamiensis (strain G4 / LMG 22486) (Burkholderia cepacia (strain R1808)).